The following is a 354-amino-acid chain: Uptake hydrogenase small subunit (354 aa).

Positions 1–44 (MSQLETXYDVMRRQGITRRSFLKYCSLTGRPCLGPTFAPQIAHA) form a signal peptide, tat-type signal. Cysteine 61, cysteine 64, cysteine 156, cysteine 190, histidine 228, serine 231, cysteine 256, and cysteine 262 together coordinate [4Fe-4S] cluster. [3Fe-4S] cluster-binding residues include cysteine 271, cysteine 290, and cysteine 293.

The protein belongs to the [NiFe]/[NiFeSe] hydrogenase small subunit family. Heterodimer of a large and a small subunit. The cofactor is [4Fe-4S] cluster. [3Fe-4S] cluster serves as cofactor. Predicted to be exported by the Tat system. The position of the signal peptide cleavage has not been experimentally proven.

The protein localises to the cell membrane. It catalyses the reaction H2 + A = AH2. Its function is as follows. This enzyme recycles the H(2) produced by nitrogenase to increase the production of ATP and to protect nitrogenase against inhibition or damage by O(2) under carbon- or phosphate-limited conditions. In Azotobacter chroococcum mcd 1, this protein is Uptake hydrogenase small subunit (hupA).